Consider the following 308-residue polypeptide: tRNA dimethylallyltransferase (308 aa).

8–15 (GATAVGKT) is a binding site for ATP. 10–15 (TAVGKT) lines the substrate pocket. The tract at residues 33–36 (DSRQ) is interaction with substrate tRNA.

The protein belongs to the IPP transferase family. As to quaternary structure, monomer. Mg(2+) is required as a cofactor.

It carries out the reaction adenosine(37) in tRNA + dimethylallyl diphosphate = N(6)-dimethylallyladenosine(37) in tRNA + diphosphate. Functionally, catalyzes the transfer of a dimethylallyl group onto the adenine at position 37 in tRNAs that read codons beginning with uridine, leading to the formation of N6-(dimethylallyl)adenosine (i(6)A). The chain is tRNA dimethylallyltransferase from Kosmotoga olearia (strain ATCC BAA-1733 / DSM 21960 / TBF 19.5.1).